The primary structure comprises 202 residues: LexA repressor (202 aa).

A DNA-binding region (H-T-H motif) is located at residues 27 to 47 (RAEIAAELGFRSANAAEEHLR). Residues S119 and K156 each act as for autocatalytic cleavage activity in the active site.

This sequence belongs to the peptidase S24 family. Homodimer.

It carries out the reaction Hydrolysis of Ala-|-Gly bond in repressor LexA.. Represses a number of genes involved in the response to DNA damage (SOS response), including recA and lexA. In the presence of single-stranded DNA, RecA interacts with LexA causing an autocatalytic cleavage which disrupts the DNA-binding part of LexA, leading to derepression of the SOS regulon and eventually DNA repair. The polypeptide is LexA repressor (Marinobacter nauticus (strain ATCC 700491 / DSM 11845 / VT8) (Marinobacter aquaeolei)).